A 164-amino-acid chain; its full sequence is Large ribosomal subunit protein uL10 (164 aa).

Belongs to the universal ribosomal protein uL10 family. Part of the ribosomal stalk of the 50S ribosomal subunit. The N-terminus interacts with L11 and the large rRNA to form the base of the stalk. The C-terminus forms an elongated spine to which L12 dimers bind in a sequential fashion forming a multimeric L10(L12)X complex.

Functionally, forms part of the ribosomal stalk, playing a central role in the interaction of the ribosome with GTP-bound translation factors. The sequence is that of Large ribosomal subunit protein uL10 from Helicobacter pylori (strain HPAG1).